Here is a 288-residue protein sequence, read N- to C-terminus: Energy-coupling factor transporter ATP-binding protein EcfA2 (288 aa).

One can recognise an ABC transporter domain in the interval 2 to 244 (IKFEKVNYTY…VDFLKAHELG (243 aa)). Residue 39–46 (GHTGSGKS) coordinates ATP.

It belongs to the ABC transporter superfamily. Energy-coupling factor EcfA family. Forms a stable energy-coupling factor (ECF) transporter complex composed of 2 membrane-embedded substrate-binding proteins (S component), 2 ATP-binding proteins (A component) and 2 transmembrane proteins (T component).

It localises to the cell membrane. Its function is as follows. ATP-binding (A) component of a common energy-coupling factor (ECF) ABC-transporter complex. Unlike classic ABC transporters this ECF transporter provides the energy necessary to transport a number of different substrates. This Lactococcus lactis subsp. lactis (strain IL1403) (Streptococcus lactis) protein is Energy-coupling factor transporter ATP-binding protein EcfA2.